The chain runs to 568 residues: N66 matrix protein (568 aa).

The signal sequence occupies residues 1–22 (MWRMTTLLHLTALLVLIPLCHC). The Alpha-carbonic anhydrase domain maps to 55–567 (AGFSYNRDIC…KHPLRVYKNS (513 aa)). His154, His156, and His179 together coordinate Zn(2+). The segment at 259–421 (NGNNGNNGNG…NGYNGDNGNS (163 aa)) is disordered. Residues 280–290 (GNNGNGNGNNG) show a composition bias toward gly residues. The segment covering 291 to 318 (YNGNNGYNGNNGNNGNGNNDNNGNDNNG) has biased composition (low complexity). 2 stretches are compositionally biased toward gly residues: residues 319–352 (NNGG…GNNG) and 362–380 (NGNG…GNNG). N-linked (GlcNAc...) asparagine glycosylation occurs at Asn389. Over residues 390–413 (GSNGNNGGNGNNGNNGDNGNGDNG) the composition is skewed to gly residues. 506–507 (TT) is a substrate binding site. N-linked (GlcNAc...) asparagine glycosylation occurs at Asn511.

It belongs to the alpha-carbonic anhydrase family. In terms of assembly, homooligomer; disulfide-linked. May also be disulfide-linked to insoluble organic matrix. It depends on Zn(2+) as a cofactor. As to expression, expressed in both the dorsal region of the mantle and the mantle edge. Is dispersed in calcium carbonate and also linked by disulfide bonds to the organic core of nacre.

Its subcellular location is the secreted. It is found in the extracellular space. It localises to the extracellular matrix. The enzyme catalyses hydrogencarbonate + H(+) = CO2 + H2O. Acts as a negative regulator for calcification in the shells of mollusks. May function both as a calcium concentrator and as a carbonic anhydrase required for production of carbonate ions, which are assembled to CaCO(3) at mineralization sites. Is important for shell formation in both the calcitic prismatic layer and the aragonitic nacreous layer. The protein is N66 matrix protein of Pinctada maxima (Silver-lipped pearl oyster).